The primary structure comprises 530 residues: Dual specificity calcium/calmodulin-dependent 3',5'-cyclic nucleotide phosphodiesterase 1A (530 aa).

2 calmodulin-binding regions span residues 24 to 44 (TEKMWQRLKGILRCLVKQLEK) and 114 to 137 (EKPRFRSIVHVVQAGIFVERMYRK). A PDEase domain is found at 142–508 (VGLAYPEAVI…ERWKELAAQG (367 aa)). The active-site Proton donor is His-219. Positions 223, 259, 260, and 366 each coordinate Zn(2+). Position 260 (Asp-260) interacts with Mg(2+). Disordered regions lie at residues 450–471 (TKTPSYGASRRSNMKGTTNDGT) and 502–530 (KELAAQGEPDPHKNSDLVNAEEKHAETHS). The span at 451–471 (KTPSYGASRRSNMKGTTNDGT) shows a compositional bias: polar residues. A compositionally biased stretch (basic and acidic residues) spans 510 to 530 (PDPHKNSDLVNAEEKHAETHS).

Belongs to the cyclic nucleotide phosphodiesterase family. PDE1 subfamily. As to quaternary structure, homodimer. Interacts with YWHAZ. Requires Zn(2+) as cofactor. The cofactor is Mg(2+).

It carries out the reaction a nucleoside 3',5'-cyclic phosphate + H2O = a nucleoside 5'-phosphate + H(+). It catalyses the reaction 3',5'-cyclic GMP + H2O = GMP + H(+). The catalysed reaction is 3',5'-cyclic AMP + H2O = AMP + H(+). Its activity is regulated as follows. Type I PDE are activated by the binding of calmodulin in the presence of Ca(2+). Calcium/calmodulin-dependent cyclic nucleotide phosphodiesterase with a dual specificity for the second messengers cGMP and cAMP, which are key regulators of many important physiological processes. Has a higher efficiency with cGMP compared to cAMP. The sequence is that of Dual specificity calcium/calmodulin-dependent 3',5'-cyclic nucleotide phosphodiesterase 1A from Bos taurus (Bovine).